A 263-amino-acid polypeptide reads, in one-letter code: Tryptophan synthase alpha chain (263 aa).

Catalysis depends on proton acceptor residues glutamate 49 and aspartate 60.

The protein belongs to the TrpA family. Tetramer of two alpha and two beta chains.

The enzyme catalyses (1S,2R)-1-C-(indol-3-yl)glycerol 3-phosphate + L-serine = D-glyceraldehyde 3-phosphate + L-tryptophan + H2O. Its pathway is amino-acid biosynthesis; L-tryptophan biosynthesis; L-tryptophan from chorismate: step 5/5. Its function is as follows. The alpha subunit is responsible for the aldol cleavage of indoleglycerol phosphate to indole and glyceraldehyde 3-phosphate. The chain is Tryptophan synthase alpha chain from Clostridium kluyveri (strain NBRC 12016).